The chain runs to 853 residues: Transforming growth factor beta receptor type 3 (853 aa).

The signal sequence occupies residues 1-23 (MAVTSHHMIPVMVVLMSACLATA). The Extracellular portion of the chain corresponds to 24–789 (GPEPSTRCEL…IFHGLDTLTV (766 aa)). N-linked (GlcNAc...) asparagine glycans are attached at residues Asn-37, Asn-144, and Asn-493. Residues Cys-55 and Cys-200 are joined by a disulfide bond. The ZP domain maps to 456-730 (KCDHEKMVVA…PRCVTPDDAC (275 aa)). Residues 530–559 (SPGDSSGWPDGYEDLESGDNGFPGDGDEGE) form a disordered region. O-linked (Xyl...) (glycosaminoglycan) serine glycosylation is found at Ser-535 and Ser-546. N-linked (GlcNAc...) asparagine glycosylation is found at Asn-572, Asn-591, and Asn-698. 3 disulfide bridges follow: Cys-640/Cys-706, Cys-661/Cys-730, and Cys-711/Cys-723. An interaction with TGF-beta ligand region spans residues 737–751 (MIWTMMQNKKTFTKP). A helical transmembrane segment spans residues 790–811 (MGIAFAAFVIGALLTGALWYIY). Over 812–853 (SHTGETARRQQVPTSPPASENSSAAHSIGSTQSTPCSSSSTA) the chain is Cytoplasmic. Residues 820–836 (RQQVPTSPPASENSSAA) are compositionally biased toward polar residues. Residues 820–853 (RQQVPTSPPASENSSAAHSIGSTQSTPCSSSSTA) are disordered. Residues 838 to 853 (SIGSTQSTPCSSSSTA) are compositionally biased toward low complexity. The residue at position 842 (Thr-842) is a Phosphothreonine.

As to quaternary structure, forms homodimers and homooligomers. Interacts with DYNLT4. Interacts with integrin ITGA5:ITGB1; this interaction promotes the internalization and trafficking of ITGA5:ITGB1 into endocytic vesicles. Interacts with TGFB1, BMP2, BMP5, BMP7 or GDF5 and inhibin A via the ligand binding domains. Interacts with ALK3/BMPR1A; this interaction results in the cell surface retention of BMPR1A. Interacts with ALK6/BMPR1B; this interaction enhances BMPR1B-mediated stimulation of the BMP signaling pathway. Interacts with the scaffolding protein beta-arrestin2/ARRB2; this interaction mediates internalization of TGFBR3 and thus regulates migration, actin cytoskeleton and activation of CDC42. Post-translationally, extensively modified by glycosaminoglycan groups (GAG). In terms of processing, phosphorylated in the cytoplasmic domain by the type II receptor TGFBR2 at THR-842 to mediate recruitment of ARRB2 and subsequent internalization of TGFBR2 and TGFBR3.

Its subcellular location is the cell membrane. It is found in the secreted. The protein localises to the extracellular space. The protein resides in the extracellular matrix. Functionally, cell surface receptor that regulates diverse cellular processes including cell proliferation, differentiation, migration, and apoptosis. Initiates BMP, inhibin, and TGF-beta signaling pathways by interacting with different ligands including TGFB1, BMP2, BMP5, BMP7 or GDF5. Alternatively, acts as a cell surface coreceptor for BMP ligands, serving to enhance ligand binding by differentially regulating BMPR1A/ALK3 and BMPR1B/ALK6 receptor trafficking. Promotes epithelial cell adhesion, focal adhesion formation and integrin signaling during epithelial cell spreading on fibronectin. By interacting with the scaffolding protein beta-arrestin2/ARRB2, regulates migration or actin cytoskeleton and promotes the activation of CDC42 as well as the inhibition of NF-kappa-B. In gonadotrope cells, acts as an inhibin A coreceptor and regulates follicle-stimulating hormone (FSH) levels and female fertility. Plays a role in the inhibition of directed and random cell migration in epithelial cells by altering the actin cytoskeletal organization. Participates in epithelial-mesenchymal transformation (EMT) upon binding to BMP2 or TGFB2, by activating the PAR6/SMURF1/RHOA pathway. The sequence is that of Transforming growth factor beta receptor type 3 (Tgfbr3) from Rattus norvegicus (Rat).